The following is a 631-amino-acid chain: MVDINLECVHQIEPKTRSAGQQQQERGLKEAYLEAVRILLVLLENILAQPENSMFRTIRQENKAIKEKLLSLPGCERLLEAIGFVRAPSSNAYTLPTEVSLQQVKKYRDALSERRTAWLNGTVSKSPPQQSTTSTTPLFIKPSVEYRHRIAFPRVLRTNNNFLQSLELYSDAVMQYEDNLLLATGRTLIPVEELTEMASEKLIDIQDQIASGERQEKEPCVRDLLLVELVNWFNTQFFQWVNNIPCRVCGSEESRLRRTEREGDIRVEVTVCCGQESKFYRYNDISQLLVSRKGRCGEYANCFTFLCRALDYDARIVHSHFDHVWTEVYSEAQMRWLHVDPSENVIDSPLMYQHGWKRHIDYILAYSRDDIQDVTWRYTNDHQKILHLRKLCGEKEMVQTLDAIRAKRRQNCTADRKLFLSQRNMYEVIGLTLERKPTENELKGRSSGSLSWRQSRGEHTFTNIFVFNLSATELQKRQLNVRYSCATDTYERYAKEGEHITILDSYKTWQKAQFSSKNIFRKVERDWKMAYLARLEDTDCGEIAWTFDFSKTNLKVKSYNLVFETKTFGDGKISVTVDATDGSASVENATGFKIVAKLTGGKGDVAWQHTQLFRQSLNSRDYPFDLQVQLH.

In terms of domain architecture, PUB spans 34–97 (EAVRILLVLL…PSSNAYTLPT (64 aa)). Ser126 bears the Phosphoserine mark. Cys246, Cys249, Cys272, and Cys273 together coordinate Zn(2+). Cys296 acts as the Nucleophile in catalysis. Catalysis depends on residues His323 and Asp340. One can recognise a PAW domain in the interval 441–631 (ELKGRSSGSL…YPFDLQVQLH (191 aa)).

It belongs to the transglutaminase-like superfamily. PNGase family. It depends on Zn(2+) as a cofactor.

It localises to the cytoplasm. It catalyses the reaction Hydrolysis of an N(4)-(acetyl-beta-D-glucosaminyl)asparagine residue in which the glucosamine residue may be further glycosylated, to yield a (substituted) N-acetyl-beta-D-glucosaminylamine and a peptide containing an aspartate residue.. Specifically deglycosylates the denatured form of N-linked glycoproteins in the cytoplasm and assists their proteasome-mediated degradation. Cleaves the beta-aspartyl-glucosamine (GlcNAc) of the glycan and the amide side chain of Asn, converting Asn to Asp. Prefers proteins containing high-mannose over those bearing complex type oligosaccharides. Can recognize misfolded proteins in the endoplasmic reticulum that are exported to the cytosol to be destroyed and deglycosylate them, while it has no activity toward native proteins. Deglycosylation is a prerequisite for subsequent proteasome-mediated degradation of some, but not all, misfolded glycoproteins. The chain is Peptide-N(4)-(N-acetyl-beta-glucosaminyl)asparagine amidase (Pngl) from Drosophila melanogaster (Fruit fly).